The following is a 1019-amino-acid chain: Photoactivated adenylate cyclase subunit alpha-like protein ST- (1019 aa).

A BLUF 1 domain is found at 55-148; it reads LRRLMYLSAS…GRMYGEWHMK (94 aa). In terms of domain architecture, Guanylate cyclase 1 spans 204-332; it reads VLTFIYLVEF…DCINTASRIT (129 aa). One can recognise a BLUF 2 domain in the interval 467 to 559; it reads LITLTYISQA…RVYGTPLDMT (93 aa). Residues 615 to 744 enclose the Guanylate cyclase 2 domain; the sequence is VMLATDICSF…EVSARVMAVE (130 aa). Disordered regions lie at residues 801 to 846, 887 to 923, and 963 to 993; these read EDHL…TRPH, QIAA…DQPA, and EGHR…NRAT. Basic residues predominate over residues 821-834; it reads RHQRPGPGRPRRGH.

Belongs to the adenylyl cyclase class-4/guanylyl cyclase family. In terms of assembly, heterotetramer of two alpha and two beta subunits.

It is found in the cell projection. The protein localises to the cilium. Its subcellular location is the flagellum. The protein is Photoactivated adenylate cyclase subunit alpha-like protein ST- of Euglena gracilis.